The sequence spans 312 residues: Homoserine O-acetyltransferase (312 aa).

Cysteine 142 serves as the catalytic Acyl-thioester intermediate. Substrate contacts are provided by lysine 163 and serine 192. The Proton acceptor role is filled by histidine 235. Glutamate 237 is a catalytic residue. Arginine 249 serves as a coordination point for substrate.

This sequence belongs to the MetA family.

It is found in the cytoplasm. It carries out the reaction L-homoserine + acetyl-CoA = O-acetyl-L-homoserine + CoA. Its pathway is amino-acid biosynthesis; L-methionine biosynthesis via de novo pathway; O-acetyl-L-homoserine from L-homoserine: step 1/1. Functionally, transfers an acetyl group from acetyl-CoA to L-homoserine, forming acetyl-L-homoserine. This Ruegeria sp. (strain TM1040) (Silicibacter sp.) protein is Homoserine O-acetyltransferase.